We begin with the raw amino-acid sequence, 452 residues long: Cysteine--tRNA ligase (452 aa).

Cysteine 27 is a binding site for Zn(2+). A 'HIGH' region motif is present at residues 29-39; it reads PTVQDHFHIGH. Residues aspartate 207, histidine 232, and glutamate 236 each coordinate Zn(2+). The short motif at 265 to 269 is the 'KMSKS' region element; that stretch reads KMSKS. Lysine 268 contributes to the ATP binding site.

It belongs to the class-I aminoacyl-tRNA synthetase family. Zn(2+) serves as cofactor.

Its subcellular location is the cytoplasm. The catalysed reaction is tRNA(Cys) + L-cysteine + ATP = L-cysteinyl-tRNA(Cys) + AMP + diphosphate. This chain is Cysteine--tRNA ligase, found in Thermoplasma acidophilum (strain ATCC 25905 / DSM 1728 / JCM 9062 / NBRC 15155 / AMRC-C165).